The chain runs to 603 residues: Serine/threonine-protein kinase PLK1 (603 aa).

A disordered region spans residues 1-35; that stretch reads MSAAVTAGKLARAPADPGKAGVPGVAAPGAPAAAP. At Ser-2 the chain carries N-acetylserine. A Phosphothreonine modification is found at Thr-6. Over residues 13–35 the composition is skewed to low complexity; that stretch reads APADPGKAGVPGVAAPGAPAAAP. Lys-19 is covalently cross-linked (Glycyl lysine isopeptide (Lys-Gly) (interchain with G-Cter in ubiquitin)). The Protein kinase domain occupies 53–305; the sequence is YVRGRFLGKG…INELLNDEFF (253 aa). Residues 59–67 and Lys-82 contribute to the ATP site; that span reads LGKGGFAKC. Ser-103 bears the Phosphoserine mark. Glu-131 contributes to the ATP binding site. Ser-137 carries the phosphoserine modification. Asp-176 acts as the Proton acceptor in catalysis. ATP is bound by residues 178–181 and Asp-194; that span reads KLGN. Residues 194–221 form an activation loop region; the sequence is DFGLATKVEYDGERKKTLCGTPNYIAPE. Residue Thr-210 is modified to Phosphothreonine; by AURKA. The residue at position 214 (Thr-214) is a Phosphothreonine. Ser-269 is subject to Phosphoserine; by autocatalysis. At Ser-335 the chain carries Phosphoserine. Positions 337–340 match the D-box that targets the protein for proteasomal degradation in anaphase motif; that stretch reads RKPL. A Glycyl lysine isopeptide (Lys-Gly) (interchain with G-Cter in SUMO2) cross-link involves residue Lys-338. A disordered region spans residues 338–364; the sequence is KPLTVLNKGLENPLPERPREKEEPVVR. A compositionally biased stretch (basic and acidic residues) spans 351 to 364; sequence LPERPREKEEPVVR. 2 positions are modified to phosphoserine: Ser-375 and Ser-450. A POLO box 1 domain is found at 410-488; it reads WVSKWVDYSD…LKYFRNYMSE (79 aa). A Glycyl lysine isopeptide (Lys-Gly) (interchain with G-Cter in ubiquitin) cross-link involves residue Lys-492. A linker region spans residues 493 to 507; sequence AGANITPREGDELAR. Thr-498 carries the phosphothreonine modification. The POLO box 2 domain maps to 510 to 592; the sequence is YLRTWFRTRS…ARTMVDKLLS (83 aa). Residues 538–540 form an important for interaction with phosphorylated proteins region; it reads HTK.

It belongs to the protein kinase superfamily. Ser/Thr protein kinase family. CDC5/Polo subfamily. In terms of assembly, interacts with CEP170. Interacts with EVI5. Interacts with FAM29A. Interacts with SLX4/BTBD12. Interacts with TTDN1. Interacts (via POLO-box domain) with the phosphorylated form of BUB1, CDC25C and CENPU. Interacts with KIF2A. Interacts with CYLD. Part of an astrin (SPAG5)-kinastrin (SKAP) complex containing KNSTRN, SPAG5, PLK1, DYNLL1 and SGO2. Interacts with BIRC6/bruce. Interacts with CDK1-phosphorylated FRY; this interaction occurs in mitotic cells, but not in interphase cells. FRY interaction facilitates AURKA-mediated PLK1 phosphorylation. Interacts with CDK1-phosphorylated DCTN6 during mitotic prometaphase; the interaction facilitates recruitment to kinetochores. Interacts with CEP68; the interaction phosphorylates CEP68. Interacts (via POLO-box domain) with DCTN1. Interacts with CEP20 in later G1, S, G2 and M phases of the cell cycle; this interaction recruits PLK1 to centrosomes, a step required for S phase progression. Interacts with KLHL22. Interacts (via POLO box domains) with NEDD9/HEF1 (via C-terminus). Interacts with FIRRM (via N-terminus region); required for maintaining, but not activating, PLK1 kinase activity. Interacts with FZR1. Interacts with SKA3; the interaction promotes the stability of PLK1; the interaction promotes the stability of PLK1. Interacts with the MTMR3:MTMR4 heterooligomer; brings CEP55 and PLK1 together during early mitosis, regulating the phosphorylation of CEP55 by PLK1 and its recruitment to the midbody where it can mediate cell abscission. Post-translationally, catalytic activity is enhanced by phosphorylation of Thr-210. Phosphorylation at Thr-210 is first detected on centrosomes in the G2 phase of the cell cycle, peaks in prometaphase and gradually disappears from centrosomes during anaphase. Dephosphorylation at Thr-210 at centrosomes is probably mediated by protein phosphatase 1C (PP1C), via interaction with PPP1R12A/MYPT1. Autophosphorylation and phosphorylation of Ser-137 may not be significant for the activation of PLK1 during mitosis, but may enhance catalytic activity during recovery after DNA damage checkpoint. Phosphorylated in vitro by STK10. Ubiquitinated by the anaphase promoting complex/cyclosome (APC/C) in anaphase and following DNA damage, leading to its degradation by the proteasome. Ubiquitination is mediated via its interaction with FZR1/CDH1. Ubiquitination and subsequent degradation prevents entry into mitosis and is essential to maintain an efficient G2 DNA damage checkpoint. Monoubiquitination at Lys-492 by the BCR(KLHL22) ubiquitin ligase complex does not lead to degradation: it promotes PLK1 dissociation from phosphoreceptor proteins and subsequent removal from kinetochores, allowing silencing of the spindle assembly checkpoint (SAC) and chromosome segregation. Placenta and colon.

Its subcellular location is the nucleus. The protein resides in the chromosome. It is found in the centromere. The protein localises to the kinetochore. It localises to the cytoplasm. Its subcellular location is the cytoskeleton. The protein resides in the microtubule organizing center. It is found in the centrosome. The protein localises to the spindle. It localises to the midbody. The enzyme catalyses L-seryl-[protein] + ATP = O-phospho-L-seryl-[protein] + ADP + H(+). It carries out the reaction L-threonyl-[protein] + ATP = O-phospho-L-threonyl-[protein] + ADP + H(+). Activated by phosphorylation of Thr-210 by AURKA; phosphorylation by AURKA is enhanced by BORA. Once activated, activity is stimulated by binding target proteins. Binding of target proteins has no effect on the non-activated kinase. Several inhibitors targeting PLKs are currently in development and are under investigation in a growing number of clinical trials, such as BI 2536, an ATP-competitive PLK1 inhibitor or BI 6727, a dihydropteridinone that specifically inhibits the catalytic activity of PLK1. In terms of biological role, serine/threonine-protein kinase that performs several important functions throughout M phase of the cell cycle, including the regulation of centrosome maturation and spindle assembly, the removal of cohesins from chromosome arms, the inactivation of anaphase-promoting complex/cyclosome (APC/C) inhibitors, and the regulation of mitotic exit and cytokinesis. Polo-like kinase proteins act by binding and phosphorylating proteins that are already phosphorylated on a specific motif recognized by the POLO box domains. Phosphorylates BORA, BUB1B/BUBR1, CCNB1, CDC25C, CEP55, ECT2, ERCC6L, FBXO5/EMI1, FOXM1, KIF20A/MKLP2, CENPU, NEDD1, NINL, NPM1, NUDC, PKMYT1/MYT1, KIZ, MRE11, PPP1R12A/MYPT1, POLQ, PRC1, RACGAP1/CYK4, RAD51, RHNO1, SGO1, STAG2/SA2, TEX14, TOPORS, p73/TP73, TPT1, WEE1 and HNRNPU. Plays a key role in centrosome functions and the assembly of bipolar spindles by phosphorylating KIZ, NEDD1 and NINL. NEDD1 phosphorylation promotes subsequent targeting of the gamma-tubulin ring complex (gTuRC) to the centrosome, an important step for spindle formation. Phosphorylation of NINL component of the centrosome leads to NINL dissociation from other centrosomal proteins. Involved in mitosis exit and cytokinesis by phosphorylating CEP55, ECT2, KIF20A/MKLP2, CENPU, PRC1 and RACGAP1. Recruited at the central spindle by phosphorylating and docking PRC1 and KIF20A/MKLP2; creates its own docking sites on PRC1 and KIF20A/MKLP2 by mediating phosphorylation of sites subsequently recognized by the POLO box domains. Phosphorylates RACGAP1, thereby creating a docking site for the Rho GTP exchange factor ECT2 that is essential for the cleavage furrow formation. Promotes the central spindle recruitment of ECT2. Plays a central role in G2/M transition of mitotic cell cycle by phosphorylating CCNB1, CDC25C, FOXM1, CENPU, PKMYT1/MYT1, PPP1R12A/MYPT1 and WEE1. Part of a regulatory circuit that promotes the activation of CDK1 by phosphorylating the positive regulator CDC25C and inhibiting the negative regulators WEE1 and PKMYT1/MYT1. Also acts by mediating phosphorylation of cyclin-B1 (CCNB1) on centrosomes in prophase. Phosphorylates FOXM1, a key mitotic transcription regulator, leading to enhance FOXM1 transcriptional activity. Involved in kinetochore functions and sister chromatid cohesion by phosphorylating BUB1B/BUBR1, FBXO5/EMI1 and STAG2/SA2. PLK1 is high on non-attached kinetochores suggesting a role of PLK1 in kinetochore attachment or in spindle assembly checkpoint (SAC) regulation. Required for kinetochore localization of BUB1B. Regulates the dissociation of cohesin from chromosomes by phosphorylating cohesin subunits such as STAG2/SA2. Phosphorylates SGO1: required for spindle pole localization of isoform 3 of SGO1 and plays a role in regulating its centriole cohesion function. Mediates phosphorylation of FBXO5/EMI1, a negative regulator of the APC/C complex during prophase, leading to FBXO5/EMI1 ubiquitination and degradation by the proteasome. Acts as a negative regulator of p53 family members: phosphorylates TOPORS, leading to inhibit the sumoylation of p53/TP53 and simultaneously enhance the ubiquitination and subsequent degradation of p53/TP53. Phosphorylates the transactivation domain of the transcription factor p73/TP73, leading to inhibit p73/TP73-mediated transcriptional activation and pro-apoptotic functions. Phosphorylates BORA, and thereby promotes the degradation of BORA. Contributes to the regulation of AURKA function. Also required for recovery after DNA damage checkpoint and entry into mitosis. Phosphorylates MISP, leading to stabilization of cortical and astral microtubule attachments required for proper spindle positioning. Together with MEIKIN, acts as a regulator of kinetochore function during meiosis I: required both for mono-orientation of kinetochores on sister chromosomes and protection of centromeric cohesin from separase-mediated cleavage. Phosphorylates CEP68 and is required for its degradation. Regulates nuclear envelope breakdown during prophase by phosphorylating DCTN1 resulting in its localization in the nuclear envelope. Phosphorylates the heat shock transcription factor HSF1, promoting HSF1 nuclear translocation upon heat shock. Phosphorylates HSF1 also in the early mitotic period; this phosphorylation regulates HSF1 localization to the spindle pole, the recruitment of the SCF(BTRC) ubiquitin ligase complex induicing HSF1 degradation, and hence mitotic progression. Regulates mitotic progression by phosphorylating RIOK2. Through the phosphorylation of DZIP1 regulates the localization during mitosis of the BBSome, a ciliary protein complex involved in cilium biogenesis. Regulates DNA repair during mitosis by mediating phosphorylation of POLQ and RHNO1, thereby promoting POLQ recruitment to DNA damage sites. Phosphorylates ATXN10 which may play a role in the regulation of cytokinesis and may stimulate the proteasome-mediated degradation of ATXN10. This is Serine/threonine-protein kinase PLK1 (PLK1) from Homo sapiens (Human).